Reading from the N-terminus, the 1669-residue chain is Collagen alpha-1(IV) chain (1669 aa).

The signal sequence occupies residues 1 to 27 (MGPRLSVWLLLLFAALLLHEERSRAAA). Residues 28–172 (KGDCGGSGCG…LGHVPGTLLK (145 aa)) constitute a propeptide, N-terminal propeptide (7S domain). A disordered region spans residues 47-1443 (QKGERGLPGL…MGPPGTPSVD (1397 aa)). The segment covering 92–104 (TRGPPGAAGYPGN) has biased composition (low complexity). The N-linked (GlcNAc...) asparagine glycan is linked to Asn126. The tract at residues 173 to 1440 (GERGFPGIPG…PGSMGPPGTP (1268 aa)) is triple-helical region. Residues 196–214 (VGPPGFTGPPGPPGPPGPP) are compositionally biased toward pro residues. A 3-hydroxyproline mark is found at Pro204, Pro207, and Pro210. Residues 234 to 247 (QGVSGPPGVPGQAQ) show a composition bias toward low complexity. A compositionally biased stretch (basic and acidic residues) spans 289 to 298 (PGKDGEKGER). The segment covering 367 to 376 (PGQPGPPGFP) has biased composition (pro residues). The segment covering 377–387 (TPGQAGAPGFP) has biased composition (low complexity). 2 stretches are compositionally biased toward pro residues: residues 413 to 424 (PGPPGPPGPPGQ) and 436 to 448 (PGPP…PGTP). Residues 485 to 494 (PGEIGFPGQP) are compositionally biased toward low complexity. Composition is skewed to basic and acidic residues over residues 497 to 508 (KGDRGLPGRDGL) and 535 to 545 (FDMRLKGDKGD). A compositionally biased stretch (gly residues) spans 586-595 (GPPGGVGFPG). 2 positions are modified to 3-hydroxyproline: Pro587 and Pro602. Residue Pro603 is modified to 4-hydroxyproline. 3-hydroxyproline is present on Pro605. Pro606 is subject to 4-hydroxyproline. Positions 611–620 (IGPVGEKGQA) are enriched in low complexity. Positions 621 to 630 (GFPGGPGSPG) are enriched in gly residues. 4-hydroxyproline occurs at positions 623, 626, 629, and 632. Pro647 bears the 3-hydroxyproline mark. A compositionally biased stretch (low complexity) spans 715–731 (RPGFNGLPGNPGPQGQK). Residues 758–767 (GSIGGPGVPG) show a composition bias toward gly residues. The span at 784 to 802 (PGPPGVQGPAGPPGVPGIG) shows a compositional bias: pro residues. The span at 803–817 (PPGAMGPPGGQGPPG) shows a compositional bias: gly residues. 2 stretches are compositionally biased toward low complexity: residues 847–875 (SQGL…PGFP) and 994–1003 (DPGLSGTPGS). Residues 1011–1020 (GSVGGMGLPG) show a composition bias toward gly residues. Position 1214 is a 3-hydroxyproline (Pro1214). The span at 1220–1230 (QPGLPGTPGHP) shows a compositional bias: low complexity. Residues 1247-1258 (PGHPGPMGPPGF) show a composition bias toward pro residues. Residues 1290–1299 (GMPGIGGSPG) show a composition bias toward gly residues. 3 stretches are compositionally biased toward low complexity: residues 1333-1343 (DQGVPGPKGLQ), 1368-1391 (PGLK…SVGL), and 1398-1412 (PGFD…ETGP). The segment covering 1413–1428 (FGPPGPRGFPGPPGPD) has biased composition (pro residues). Pro1424 carries the 3-hydroxyproline modification. One can recognise a Collagen IV NC1 domain in the interval 1445-1669 (GFLVTRHSQT…SRCQVCMRRT (225 aa)). 6 cysteine pairs are disulfide-bonded: Cys1460–Cys1551, Cys1493–Cys1548, Cys1505–Cys1511, Cys1570–Cys1665, Cys1604–Cys1662, and Cys1616–Cys1622. Met1533 participates in a covalent cross-link: S-Lysyl-methionine sulfilimine (Met-Lys) (interchain with K-1651). Lys1651 participates in a covalent cross-link: S-Lysyl-methionine sulfilimine (Lys-Met) (interchain with M-1533).

It belongs to the type IV collagen family. There are six type IV collagen isoforms, alpha 1(IV)-alpha 6(IV), each of which can form a triple helix structure with 2 other chains to generate type IV collagen network. Interacts with EFEMP2. Lysines at the third position of the tripeptide repeating unit (G-X-Y) are hydroxylated. The modified lysines can be O-glycosylated. In terms of processing, contains 4-hydroxyproline. Prolines at the third position of the tripeptide repeating unit (G-X-Y) are hydroxylated in some or all of the chains. Post-translationally, contains 3-hydroxyproline. This modification occurs on the first proline residue in the sequence motif Gly-Pro-Hyp, where Hyp is 4-hydroxyproline. Type IV collagens contain numerous cysteine residues which are involved in inter- and intramolecular disulfide bonding. 12 of these, located in the NC1 domain, are conserved in all known type IV collagens. In terms of processing, the trimeric structure of the NC1 domains is stabilized by covalent bonds (sulfilimine cross-links) between Lys and Met residues. These cross-links are important for the mechanical stability of the basement membrane. Sulfilimine cross-link is catalyzed by PXDN. Post-translationally, proteolytic processing produces the C-terminal NC1 peptide, arresten. Detected in the basement membrane of the cornea (at protein level).

The protein resides in the secreted. It localises to the extracellular space. The protein localises to the extracellular matrix. It is found in the basement membrane. Functionally, type IV collagen is the major structural component of glomerular basement membranes (GBM), forming a 'chicken-wire' meshwork together with laminins, proteoglycans and entactin/nidogen. Arresten, comprising the C-terminal NC1 domain, inhibits angiogenesis and tumor formation. The C-terminal half is found to possess the anti-angiogenic activity. Specifically inhibits endothelial cell proliferation, migration and tube formation. The chain is Collagen alpha-1(IV) chain from Mus musculus (Mouse).